A 115-amino-acid chain; its full sequence is Large ribosomal subunit protein bL19 (115 aa).

Belongs to the bacterial ribosomal protein bL19 family.

In terms of biological role, this protein is located at the 30S-50S ribosomal subunit interface and may play a role in the structure and function of the aminoacyl-tRNA binding site. The protein is Large ribosomal subunit protein bL19 of Clostridium tetani (strain Massachusetts / E88).